The following is a 95-amino-acid chain: MKIRPLHDKVILKREEIETKSAGGIVLTGSAATKSTRGTVIAVGNGRTLDNGTVLPLNVKVGDVVIFNEYGVKEEKIDGETVLILSEDNILAIVE.

The protein belongs to the GroES chaperonin family. In terms of assembly, heptamer of 7 subunits arranged in a ring. Interacts with the chaperonin GroEL.

The protein resides in the cytoplasm. Together with the chaperonin GroEL, plays an essential role in assisting protein folding. The GroEL-GroES system forms a nano-cage that allows encapsulation of the non-native substrate proteins and provides a physical environment optimized to promote and accelerate protein folding. GroES binds to the apical surface of the GroEL ring, thereby capping the opening of the GroEL channel. In Glaesserella parasuis serovar 5 (strain SH0165) (Haemophilus parasuis), this protein is Co-chaperonin GroES.